The chain runs to 93 residues: Islet amyloid polypeptide (93 aa).

The signal sequence occupies residues methionine 1–alanine 23. A propeptide spanning residues threonine 24 to aspartate 35 is cleaved from the precursor. Cysteines 39 and 44 form a disulfide. Position 74 is a tyrosine amide (tyrosine 74). Positions asparagine 78–leucine 93 are excised as a propeptide.

This sequence belongs to the calcitonin family. Can form homodimers. Interacts with IDE and INS. Interaction with INS inhibits homodimerization and fibril formation. As to expression, abundant in the islets of Langerhans but is not present in the brain or seven other tissues examined.

It is found in the secreted. In terms of biological role, amylin/IAPP is a glucoregulatory peptide hormone that plays an important role in the regulation of energy homeostasis. Selectively inhibits insulin-stimulated glucose utilization and glycogen deposition in muscle, while not affecting adipocyte glucose metabolism. IAPP function is mediated by the CALCR-RAMPs (AMYRs) receptor complexes. Amylin can also bind CALCR receptor in the absence of RAMPs, although it is more selective for AMYRs. This chain is Islet amyloid polypeptide, found in Rattus norvegicus (Rat).